The following is a 551-amino-acid chain: Tetrachloroethene reductive dehalogenase (551 aa).

The tat-type signal signal peptide spans 1–39; sequence MGEINRRNFLKVSILGAAAAAVASASAVKGMVSPLVADA. A 4Fe-4S ferredoxin-type 1 domain is found at 411-440; that stretch reads PRKFGVREFCRLCKKCADACPAQAISHEKD. The [4Fe-4S] cluster site is built by C420, C423, C426, C430, C467, C478, C481, and C485. The 4Fe-4S ferredoxin-type 2 domain maps to 478–496; it reads CSNCVAVCSWNKVETWNHD.

Belongs to the PceA family. It depends on [4Fe-4S] cluster as a cofactor. Requires corrinoid as cofactor. In terms of processing, predicted to be exported by the Tat system. The position of the signal peptide cleavage has been experimentally proven.

It is found in the cytoplasm. The protein localises to the cell membrane. The protein resides in the secreted. The enzyme catalyses trichloroethene + chloride + A + H(+) = tetrachloroethene + AH2. It carries out the reaction trichloroethene + AH2 = (Z)-1,2-dichloroethene + chloride + A + H(+). PceT is required as a chaperone for prePceA maturation. In the absence or presence of exogenous vitamin B12, the intracellular corrinoid level decreases in fumarate-grown cells and the PceA precursor forms catalytically inactive, corrinoid-free multiprotein aggregates. Exogenous vitamin B12 is not incorporated into the PceA precursor, even though it affects the transposition of the pce gene cluster. Functionally, catalyzes the reductive dechlorination of tetrachloroethene (PCE) to trichloroethene (TCE) and of trichloroethene to cis-1,2-dichloroethene (DCE). Can also use various chlorinated ethanes such as tetrachloroethane, pentachloroethane and hexachloroethane. Reduced methyl viologen can act as the artificial electron donor. This Desulfitobacterium hafniense (strain Y51) protein is Tetrachloroethene reductive dehalogenase.